We begin with the raw amino-acid sequence, 241 residues long: LexA repressor (241 aa).

The segment at residues 41 to 61 (FREIGNAAGLKSPSSVKHQLQ) is a DNA-binding region (H-T-H motif). Residues Ser-165 and Lys-202 each act as for autocatalytic cleavage activity in the active site.

This sequence belongs to the peptidase S24 family. As to quaternary structure, homodimer.

The catalysed reaction is Hydrolysis of Ala-|-Gly bond in repressor LexA.. Its function is as follows. Represses a number of genes involved in the response to DNA damage (SOS response), including recA and lexA. In the presence of single-stranded DNA, RecA interacts with LexA causing an autocatalytic cleavage which disrupts the DNA-binding part of LexA, leading to derepression of the SOS regulon and eventually DNA repair. The sequence is that of LexA repressor from Bifidobacterium longum subsp. infantis (strain ATCC 15697 / DSM 20088 / JCM 1222 / NCTC 11817 / S12).